A 335-amino-acid polypeptide reads, in one-letter code: Histidinol-phosphatase (335 aa).

The protein belongs to the PHP hydrolase family. HisK subfamily.

It carries out the reaction L-histidinol phosphate + H2O = L-histidinol + phosphate. The protein operates within amino-acid biosynthesis; L-histidine biosynthesis; L-histidine from 5-phospho-alpha-D-ribose 1-diphosphate: step 8/9. In Saccharomyces cerevisiae (strain ATCC 204508 / S288c) (Baker's yeast), this protein is Histidinol-phosphatase (HIS2).